The primary structure comprises 241 residues: MRKSVIAGNWKMHMTCAEAKSYLEEFIPLIKNIRDDRKVVIAPPFTAISTFSKHSDFDYLDISSQNIHWEDEGAFTAEISPKMLIEHGVSYAIVGHSEPRKYFSESDEQINKRAVFAQCSGLTPIVCVGETLEQRERGEADRVITRQVEQGLENTDPSNLIVAYEPIWAIGTGKTCEAKDANNICSLIRKLIGFDDVIIQYGGSVKPNNIDEIMSMSDIDGVLVGGASLDPNSFARIANYQ.

Residue 9-11 coordinates substrate; that stretch reads NWK. Catalysis depends on histidine 96, which acts as the Electrophile. Residue glutamate 165 is the Proton acceptor of the active site. Residues glycine 171, serine 204, and 225-226 each bind substrate; that span reads GG.

It belongs to the triosephosphate isomerase family. In terms of assembly, homodimer.

The protein resides in the cytoplasm. The catalysed reaction is D-glyceraldehyde 3-phosphate = dihydroxyacetone phosphate. It participates in carbohydrate biosynthesis; gluconeogenesis. It functions in the pathway carbohydrate degradation; glycolysis; D-glyceraldehyde 3-phosphate from glycerone phosphate: step 1/1. Its function is as follows. Involved in the gluconeogenesis. Catalyzes stereospecifically the conversion of dihydroxyacetone phosphate (DHAP) to D-glyceraldehyde-3-phosphate (G3P). The polypeptide is Triosephosphate isomerase (Prochlorococcus marinus (strain MIT 9312)).